Consider the following 380-residue polypeptide: SAM and SH3 domain-containing protein 3 (380 aa).

The tract at residues 1–76 (MLRRKPSNAS…KSGKKLGKKW (76 aa)) is disordered. The segment covering 22–41 (LQRSSSFKDFAKSKPSSPVV) has biased composition (low complexity). Phosphoserine occurs at positions 27, 34, and 42. Thr-61 is subject to Phosphothreonine. Ser-97 is modified (phosphoserine). 3 disordered regions span residues 98-174 (EEMA…TGPF), 237-256 (VGHA…KPKT), and 318-380 (TGSE…AGAP). Thr-103 is subject to Phosphothreonine. The residue at position 110 (Ser-110) is a Phosphoserine. Position 112 is a phosphothreonine (Thr-112). Ser-113 is subject to Phosphoserine. A Phosphotyrosine modification is found at Tyr-116. Ser-120 carries the post-translational modification Phosphoserine. Positions 143–152 (RQASTGSELC) are enriched in polar residues. Over residues 153–164 (SPSPGSGSFGEE) the composition is skewed to low complexity. The SH3 domain occupies 173–234 (PFCGRARVHT…KFIYVDVLPE (62 aa)). Residues 241–255 (RPSRRQSKGKRPKPK) show a composition bias toward basic residues. The 65-residue stretch at 252–316 (PKPKTLHELL…LTAAELLLDY (65 aa)) folds into the SAM domain. Thr-318 carries the post-translational modification Phosphothreonine. The span at 318 to 327 (TGSEEAEEGA) shows a compositional bias: acidic residues. Ser-320 is modified (phosphoserine).

In terms of biological role, may function as a signaling adapter protein in lymphocytes. The chain is SAM and SH3 domain-containing protein 3 (SASH3) from Homo sapiens (Human).